The primary structure comprises 262 residues: Phosphonates import ATP-binding protein PhnC (262 aa).

The ABC transporter domain maps to 5–253; it reads IRVEKLAKTF…RFDHLYRSIN (249 aa). 37-44 serves as a coordination point for ATP; sequence GPSGSGKS.

This sequence belongs to the ABC transporter superfamily. Phosphonates importer (TC 3.A.1.9.1) family. In terms of assembly, the complex is composed of two ATP-binding proteins (PhnC), two transmembrane proteins (PhnE) and a solute-binding protein (PhnD).

It is found in the cell inner membrane. The enzyme catalyses phosphonate(out) + ATP + H2O = phosphonate(in) + ADP + phosphate + H(+). Part of the ABC transporter complex PhnCDE involved in phosphonates import. Responsible for energy coupling to the transport system. The chain is Phosphonates import ATP-binding protein PhnC from Shigella boydii serotype 4 (strain Sb227).